An 875-amino-acid chain; its full sequence is Alanine--tRNA ligase (875 aa).

Residues histidine 563, histidine 567, cysteine 665, and histidine 669 each contribute to the Zn(2+) site.

The protein belongs to the class-II aminoacyl-tRNA synthetase family. Zn(2+) serves as cofactor.

Its subcellular location is the cytoplasm. The enzyme catalyses tRNA(Ala) + L-alanine + ATP = L-alanyl-tRNA(Ala) + AMP + diphosphate. In terms of biological role, catalyzes the attachment of alanine to tRNA(Ala) in a two-step reaction: alanine is first activated by ATP to form Ala-AMP and then transferred to the acceptor end of tRNA(Ala). Also edits incorrectly charged Ser-tRNA(Ala) and Gly-tRNA(Ala) via its editing domain. This Shewanella pealeana (strain ATCC 700345 / ANG-SQ1) protein is Alanine--tRNA ligase.